The following is a 395-amino-acid chain: Levanbiose-producing levanase (395 aa).

D1 is an active-site residue. Residues 59–60, 124–125, E173, and W261 contribute to the substrate site; these read WT and RD.

The protein belongs to the glycosyl hydrolase 32 family.

Its subcellular location is the membrane. It catalyses the reaction Hydrolysis of (2-&gt;6)-beta-D-fructofuranan, to remove successive disaccharide residues as levanbiose, i.e. 6-(beta-D-fructofuranosyl)-D-fructose, from the end of the chain.. Functionally, catalyzes the degradation of levan mainly into levanbiose (difructose). Can also hydrolyze inulin. The polypeptide is Levanbiose-producing levanase (levB) (Geobacillus stearothermophilus (Bacillus stearothermophilus)).